A 150-amino-acid chain; its full sequence is Helix-loop-helix protein hlh-12 (150 aa).

The disordered stretch occupies residues 1 to 24 (MAKKPRVTKLNTDRRSRANERERQ). A compositionally biased stretch (basic and acidic residues) spans 11–24 (NTDRRSRANERERQ). The tract at residues 13–26 (DRRSRANERERQRV) is basic motif. The bHLH domain occupies 13–65 (DRRSRANERERQRVSEMNGMFDVLLNLLPPSHFKTRLSRVQILREATSYIIRL). The interval 27–65 (SEMNGMFDVLLNLLPPSHFKTRLSRVQILREATSYIIRL) is helix-loop-helix motif.

Forms a heterodimer with helix-loop-helix protein hlh-2.

It localises to the nucleus. Transcription factor which binds the E box motif 5'-GCAGGTG-3'. Involved in migration of the gonadal leader cells; distal tip cells (DTCs) in hermaphrodites, and linker cells in males. Positively regulates expression of alpha integrin ina-1 and ADAMTS protease gon-1. This chain is Helix-loop-helix protein hlh-12, found in Caenorhabditis elegans.